Here is a 339-residue protein sequence, read N- to C-terminus: Glyceraldehyde-3-phosphate dehydrogenase (339 aa).

Residues 12–13 (RI), D35, and K84 each bind NAD(+). D-glyceraldehyde 3-phosphate contacts are provided by residues 155–157 (SCT), T186, 215–216 (TG), and R238. Residue C156 is the Nucleophile of the active site. N320 is an NAD(+) binding site.

Belongs to the glyceraldehyde-3-phosphate dehydrogenase family. In terms of assembly, homotetramer.

The protein localises to the cytoplasm. It carries out the reaction D-glyceraldehyde 3-phosphate + phosphate + NAD(+) = (2R)-3-phospho-glyceroyl phosphate + NADH + H(+). Its pathway is carbohydrate degradation; glycolysis; pyruvate from D-glyceraldehyde 3-phosphate: step 1/5. This is Glyceraldehyde-3-phosphate dehydrogenase (GAPD) from Mastigamoeba balamuthi (Phreatamoeba balamuthi).